We begin with the raw amino-acid sequence, 430 residues long: Sesquiterpene synthase 15 (430 aa).

3 residues coordinate Mg(2+): Asp182, Asp186, and Glu335. The short motif at 182–186 is the DDXXD motif element; that stretch reads DDIYD.

Belongs to the terpene synthase family. Tpsa subfamily. It depends on Mg(2+) as a cofactor. Mn(2+) serves as cofactor.

It participates in secondary metabolite biosynthesis; terpenoid biosynthesis. Its function is as follows. Sesquiterpene synthase involved in the biosynthesis of volatile compounds. No activity detected with geranyl diphosphate (GPP) and farnesyl diphosphate (FPP) as substrates. The protein is Sesquiterpene synthase 15 of Solanum lycopersicum (Tomato).